Consider the following 342-residue polypeptide: UDP-3-O-acylglucosamine N-acyltransferase (342 aa).

His253 serves as the catalytic Proton acceptor.

It belongs to the transferase hexapeptide repeat family. LpxD subfamily. As to quaternary structure, homotrimer.

The catalysed reaction is a UDP-3-O-[(3R)-3-hydroxyacyl]-alpha-D-glucosamine + a (3R)-hydroxyacyl-[ACP] = a UDP-2-N,3-O-bis[(3R)-3-hydroxyacyl]-alpha-D-glucosamine + holo-[ACP] + H(+). It participates in bacterial outer membrane biogenesis; LPS lipid A biosynthesis. Functionally, catalyzes the N-acylation of UDP-3-O-acylglucosamine using 3-hydroxyacyl-ACP as the acyl donor. Is involved in the biosynthesis of lipid A, a phosphorylated glycolipid that anchors the lipopolysaccharide to the outer membrane of the cell. The chain is UDP-3-O-acylglucosamine N-acyltransferase from Rickettsia canadensis (strain McKiel).